We begin with the raw amino-acid sequence, 102 residues long: NADH-quinone oxidoreductase subunit K 1 (102 aa).

The next 3 membrane-spanning stretches (helical) occupy residues 5–25 (LYEVLILASILFAMGLACVVA), 30–50 (VIMMLIGIEIMLNAVMLTFVG), and 62–82 (VFSLMIMALTSAEVSLALAMV).

The protein belongs to the complex I subunit 4L family. As to quaternary structure, NDH-1 is composed of 14 different subunits. Subunits NuoA, H, J, K, L, M, N constitute the membrane sector of the complex.

The protein resides in the cell inner membrane. The catalysed reaction is a quinone + NADH + 5 H(+)(in) = a quinol + NAD(+) + 4 H(+)(out). Its function is as follows. NDH-1 shuttles electrons from NADH, via FMN and iron-sulfur (Fe-S) centers, to quinones in the respiratory chain. The immediate electron acceptor for the enzyme in this species is believed to be ubiquinone. Couples the redox reaction to proton translocation (for every two electrons transferred, four hydrogen ions are translocated across the cytoplasmic membrane), and thus conserves the redox energy in a proton gradient. This is NADH-quinone oxidoreductase subunit K 1 from Geobacter sp. (strain M21).